A 337-amino-acid chain; its full sequence is UDP-N-acetylenolpyruvoylglucosamine reductase (337 aa).

One can recognise an FAD-binding PCMH-type domain in the interval 17 to 186; it reads IEAKAKQFIA…TSVIYKLTKR (170 aa). The active site involves Arg162. Ser237 acts as the Proton donor in catalysis. Residue Glu333 is part of the active site.

This sequence belongs to the MurB family. It depends on FAD as a cofactor.

It is found in the cytoplasm. The enzyme catalyses UDP-N-acetyl-alpha-D-muramate + NADP(+) = UDP-N-acetyl-3-O-(1-carboxyvinyl)-alpha-D-glucosamine + NADPH + H(+). Its pathway is cell wall biogenesis; peptidoglycan biosynthesis. Cell wall formation. The sequence is that of UDP-N-acetylenolpyruvoylglucosamine reductase from Flavobacterium johnsoniae (strain ATCC 17061 / DSM 2064 / JCM 8514 / BCRC 14874 / CCUG 350202 / NBRC 14942 / NCIMB 11054 / UW101) (Cytophaga johnsonae).